We begin with the raw amino-acid sequence, 490 residues long: ATP synthase subunit beta, chloroplastic (490 aa).

The residue at position 6 (Thr-6) is a Phosphothreonine. A Phosphoserine modification is found at Ser-13. Residue 172-179 (GGAGVGKT) participates in ATP binding.

Belongs to the ATPase alpha/beta chains family. As to quaternary structure, F-type ATPases have 2 components, CF(1) - the catalytic core - and CF(0) - the membrane proton channel. CF(1) has five subunits: alpha(3), beta(3), gamma(1), delta(1), epsilon(1). CF(0) has four main subunits: a(1), b(1), b'(1) and c(9-12).

The protein resides in the plastid. The protein localises to the chloroplast thylakoid membrane. It catalyses the reaction ATP + H2O + 4 H(+)(in) = ADP + phosphate + 5 H(+)(out). In terms of biological role, produces ATP from ADP in the presence of a proton gradient across the membrane. The catalytic sites are hosted primarily by the beta subunits. The protein is ATP synthase subunit beta, chloroplastic of Aethionema cordifolium (Lebanon stonecress).